A 173-amino-acid polypeptide reads, in one-letter code: Dual-action ribosomal maturation protein DarP (173 aa).

This sequence belongs to the DarP family.

It is found in the cytoplasm. Functionally, member of a network of 50S ribosomal subunit biogenesis factors which assembles along the 30S-50S interface, preventing incorrect 23S rRNA structures from forming. Promotes peptidyl transferase center (PTC) maturation. The sequence is that of Dual-action ribosomal maturation protein DarP from Pseudomonas syringae pv. tomato (strain ATCC BAA-871 / DC3000).